Here is a 1379-residue protein sequence, read N- to C-terminus: DNA-directed RNA polymerase subunit beta (1379 aa).

It belongs to the RNA polymerase beta chain family. As to quaternary structure, in plastids the minimal PEP RNA polymerase catalytic core is composed of four subunits: alpha, beta, beta', and beta''. When a (nuclear-encoded) sigma factor is associated with the core the holoenzyme is formed, which can initiate transcription.

The protein localises to the plastid. The protein resides in the chloroplast. The catalysed reaction is RNA(n) + a ribonucleoside 5'-triphosphate = RNA(n+1) + diphosphate. DNA-dependent RNA polymerase catalyzes the transcription of DNA into RNA using the four ribonucleoside triphosphates as substrates. The polypeptide is DNA-directed RNA polymerase subunit beta (Trieres chinensis (Marine centric diatom)).